We begin with the raw amino-acid sequence, 508 residues long: Photosystem II CP47 reaction center protein (508 aa).

The next 6 membrane-spanning stretches (helical) occupy residues 21 to 36 (SVHI…WAGS), 101 to 115 (IVFS…IWHW), 140 to 156 (GIHL…FGAF), 203 to 218 (IAAG…FHLS), 237 to 252 (VLSS…AFVV), and 457 to 472 (SFAL…HGAR).

Belongs to the PsbB/PsbC family. PsbB subfamily. In terms of assembly, PSII is composed of 1 copy each of membrane proteins PsbA, PsbB, PsbC, PsbD, PsbE, PsbF, PsbH, PsbI, PsbJ, PsbK, PsbL, PsbM, PsbT, PsbX, PsbY, PsbZ, Psb30/Ycf12, at least 3 peripheral proteins of the oxygen-evolving complex and a large number of cofactors. It forms dimeric complexes. Binds multiple chlorophylls. PSII binds additional chlorophylls, carotenoids and specific lipids. serves as cofactor.

Its subcellular location is the plastid. It localises to the chloroplast thylakoid membrane. In terms of biological role, one of the components of the core complex of photosystem II (PSII). It binds chlorophyll and helps catalyze the primary light-induced photochemical processes of PSII. PSII is a light-driven water:plastoquinone oxidoreductase, using light energy to abstract electrons from H(2)O, generating O(2) and a proton gradient subsequently used for ATP formation. In Manihot esculenta (Cassava), this protein is Photosystem II CP47 reaction center protein.